Here is a 120-residue protein sequence, read N- to C-terminus: Large ribosomal subunit protein uL18 (120 aa).

Residues M1–E10 show a composition bias toward basic and acidic residues. The tract at residues M1–R26 is disordered.

It belongs to the universal ribosomal protein uL18 family. In terms of assembly, part of the 50S ribosomal subunit; part of the 5S rRNA/L5/L18/L25 subcomplex. Contacts the 5S and 23S rRNAs.

Its function is as follows. This is one of the proteins that bind and probably mediate the attachment of the 5S RNA into the large ribosomal subunit, where it forms part of the central protuberance. The chain is Large ribosomal subunit protein uL18 from Nostoc sp. (strain PCC 7120 / SAG 25.82 / UTEX 2576).